The primary structure comprises 417 residues: D-amino acid dehydrogenase (417 aa).

3–17 lines the FAD pocket; that stretch reads AVVLGSGVVGLMSAW.

Belongs to the DadA oxidoreductase family. FAD is required as a cofactor.

The enzyme catalyses a D-alpha-amino acid + A + H2O = a 2-oxocarboxylate + AH2 + NH4(+). Functionally, oxidative deamination of D-amino acids. In Vibrio vulnificus (strain YJ016), this protein is D-amino acid dehydrogenase.